Here is an 85-residue protein sequence, read N- to C-terminus: Selenoprotein W (85 aa).

Residues 10 to 13 (CGAU) constitute a cross-link (cysteinyl-selenocysteine (Cys-Sec); redox-active). Residue selenocysteine 13 is a non-standard amino acid, selenocysteine.

This sequence belongs to the SelWTH family. Selenoprotein W subfamily. Expressed ubiquitously with predominant expression in the pituitary, spinal cord, sciatic nerve, cerebral cortex, cerebral nuclei, thalamus, cerebellum, muscle, cartilage, trachea, gizzard and artery. Weakly expressed in pancreas, testis, ovary, kidney and veins.

Its subcellular location is the cytoplasm. Functionally, plays a role as a glutathione (GSH)-dependent antioxidant. May be involved in a redox-related process. May play a role in the myopathies of selenium deficiency. This Gallus gallus (Chicken) protein is Selenoprotein W.